The sequence spans 360 residues: Epoxyqueuosine reductase (360 aa).

Residue aspartate 142 is the Proton donor of the active site. The region spanning 187–216 (APTEPVTAHCGSCQACMDVCPTQAIVAPHR) is the 4Fe-4S ferredoxin-type domain. Cysteine 196, cysteine 199, cysteine 202, cysteine 206, cysteine 222, cysteine 249, cysteine 252, and cysteine 256 together coordinate [4Fe-4S] cluster.

This sequence belongs to the QueG family. In terms of assembly, monomer. It depends on cob(II)alamin as a cofactor. Requires [4Fe-4S] cluster as cofactor.

It is found in the cytoplasm. The catalysed reaction is epoxyqueuosine(34) in tRNA + AH2 = queuosine(34) in tRNA + A + H2O. It functions in the pathway tRNA modification; tRNA-queuosine biosynthesis. Catalyzes the conversion of epoxyqueuosine (oQ) to queuosine (Q), which is a hypermodified base found in the wobble positions of tRNA(Asp), tRNA(Asn), tRNA(His) and tRNA(Tyr). In Alicycliphilus denitrificans (strain DSM 14773 / CIP 107495 / K601), this protein is Epoxyqueuosine reductase.